We begin with the raw amino-acid sequence, 303 residues long: N-acetyl-D-glucosamine kinase (303 aa).

Residues 4 to 11 and 133 to 140 each bind ATP; these read GFDMGGTK and GVGGGLIV. His157, Cys177, Cys179, and Cys184 together coordinate Zn(2+).

Belongs to the ROK (NagC/XylR) family. NagK subfamily.

The catalysed reaction is N-acetyl-D-glucosamine + ATP = N-acetyl-D-glucosamine 6-phosphate + ADP + H(+). It functions in the pathway cell wall biogenesis; peptidoglycan recycling. Functionally, catalyzes the phosphorylation of N-acetyl-D-glucosamine (GlcNAc) derived from cell-wall degradation, yielding GlcNAc-6-P. In Yersinia enterocolitica serotype O:8 / biotype 1B (strain NCTC 13174 / 8081), this protein is N-acetyl-D-glucosamine kinase.